The primary structure comprises 285 residues: DNA repair protein RecO (285 aa).

The protein belongs to the RecO family.

In terms of biological role, involved in DNA repair and RecF pathway recombination. This Synechococcus sp. (strain JA-2-3B'a(2-13)) (Cyanobacteria bacterium Yellowstone B-Prime) protein is DNA repair protein RecO.